We begin with the raw amino-acid sequence, 380 residues long: Cytochrome b (380 aa).

Transmembrane regions (helical) follow at residues 34-54 (FGSL…FLAM), 78-99 (WLIR…YLHI), 114-134 (WNIG…GYVL), and 179-199 (FFTF…VHLL). His-84 and His-98 together coordinate heme b. Heme b contacts are provided by His-183 and His-197. His-202 is a binding site for a ubiquinone. 4 helical membrane passes run 227-247 (YKDL…ALFT), 289-309 (LGGV…PILH), 321-341 (ISQL…WIGG), and 348-368 (FITI…ILFP).

It belongs to the cytochrome b family. The cytochrome bc1 complex contains 3 respiratory subunits (MT-CYB, CYC1 and UQCRFS1), 2 core proteins (UQCRC1 and UQCRC2) and probably 6 low-molecular weight proteins. Requires heme b as cofactor.

Its subcellular location is the mitochondrion inner membrane. In terms of biological role, component of the ubiquinol-cytochrome c reductase complex (complex III or cytochrome b-c1 complex) that is part of the mitochondrial respiratory chain. The b-c1 complex mediates electron transfer from ubiquinol to cytochrome c. Contributes to the generation of a proton gradient across the mitochondrial membrane that is then used for ATP synthesis. The chain is Cytochrome b (mt-cyb) from Pastinachus sephen (Cowtail stingray).